Consider the following 279-residue polypeptide: Beta-porphyranase E (279 aa).

A signal peptide spans 1-18 (MGNTMLLTLLLVVVAAYG). The 259-residue stretch at 19 to 277 (QTPPPPEGFR…WVRSYTLLPV (259 aa)) folds into the GH16 domain. The substrate site is built by tryptophan 56, arginine 60, glutamate 141, glutamate 146, and glutamate 243. Catalysis depends on glutamate 141, which acts as the Nucleophile. Glutamate 146 functions as the Proton donor in the catalytic mechanism.

The protein belongs to the glycosyl hydrolase 16 family.

It localises to the periplasm. The enzyme catalyses Hydrolysis of beta-D-galactopyranose-(1-&gt;4)-alpha-L-galactopyranose-6-sulfate linkages in porphyran.. Cleaves the sulfated polysaccharide porphyran at the (1-&gt;4) linkages between beta-D-galactopyranose and alpha-L-galactopyranose-6-sulfate, forming mostly the disaccharide alpha-L-galactopyranose-6-sulfate-(1-&gt;3)-beta-D-galactose. This chain is Beta-porphyranase E (porE), found in Zobellia galactanivorans (strain DSM 12802 / CCUG 47099 / CIP 106680 / NCIMB 13871 / Dsij).